Reading from the N-terminus, the 692-residue chain is DNA ligase (692 aa).

NAD(+) is bound by residues 35–39, 88–89, and Glu117; these read DLVYD and SL. Lys119 serves as the catalytic N6-AMP-lysine intermediate. NAD(+) contacts are provided by Arg140, Glu176, Lys301, and Lys325. Zn(2+) is bound by residues Cys416, Cys419, Cys434, and Cys439. The region spanning 611–692 is the BRCT domain; that stretch reads LTNQSNSWAS…FDLIKNSKKT (82 aa).

The protein belongs to the NAD-dependent DNA ligase family. LigA subfamily. Mg(2+) is required as a cofactor. The cofactor is Mn(2+).

It catalyses the reaction NAD(+) + (deoxyribonucleotide)n-3'-hydroxyl + 5'-phospho-(deoxyribonucleotide)m = (deoxyribonucleotide)n+m + AMP + beta-nicotinamide D-nucleotide.. Functionally, DNA ligase that catalyzes the formation of phosphodiester linkages between 5'-phosphoryl and 3'-hydroxyl groups in double-stranded DNA using NAD as a coenzyme and as the energy source for the reaction. It is essential for DNA replication and repair of damaged DNA. This Mesomycoplasma hyopneumoniae (strain 232) (Mycoplasma hyopneumoniae) protein is DNA ligase.